The sequence spans 94 residues: UPF0298 protein SZO_03600 (94 aa).

This sequence belongs to the UPF0298 family.

It localises to the cytoplasm. This chain is UPF0298 protein SZO_03600, found in Streptococcus equi subsp. zooepidemicus (strain H70).